The sequence spans 137 residues: Large-conductance mechanosensitive channel (137 aa).

The next 2 membrane-spanning stretches (helical) occupy residues 9-29 and 79-99; these read AFAV…GAAF and IQTI…VKAI.

This sequence belongs to the MscL family. As to quaternary structure, homopentamer.

The protein resides in the cell inner membrane. In terms of biological role, channel that opens in response to stretch forces in the membrane lipid bilayer. May participate in the regulation of osmotic pressure changes within the cell. The sequence is that of Large-conductance mechanosensitive channel from Pseudomonas paraeruginosa (strain DSM 24068 / PA7) (Pseudomonas aeruginosa (strain PA7)).